We begin with the raw amino-acid sequence, 108 residues long: Nucleoid-associated protein Lcho_1975 (108 aa).

This sequence belongs to the YbaB/EbfC family. In terms of assembly, homodimer.

The protein localises to the cytoplasm. The protein resides in the nucleoid. Its function is as follows. Binds to DNA and alters its conformation. May be involved in regulation of gene expression, nucleoid organization and DNA protection. This chain is Nucleoid-associated protein Lcho_1975, found in Leptothrix cholodnii (strain ATCC 51168 / LMG 8142 / SP-6) (Leptothrix discophora (strain SP-6)).